Consider the following 333-residue polypeptide: 4-hydroxyproline 2-epimerase (333 aa).

Cysteine 91 functions as the Proton acceptor in the catalytic mechanism. Residues 92–93, histidine 225, and aspartate 250 contribute to the substrate site; that span reads GH. Cysteine 254 functions as the Proton donor in the catalytic mechanism. A substrate-binding site is contributed by 255-256; it reads GT.

This sequence belongs to the proline racemase family.

The catalysed reaction is trans-4-hydroxy-L-proline = cis-4-hydroxy-D-proline. Catalyzes the epimerization of trans-4-hydroxy-L-proline (t4LHyp) to cis-4-hydroxy-D-proline (c4DHyp). Is likely involved in a degradation pathway that converts t4LHyp to alpha-ketoglutarate. Displays no proline racemase activity. The sequence is that of 4-hydroxyproline 2-epimerase from Streptosporangium roseum (strain ATCC 12428 / DSM 43021 / JCM 3005 / KCTC 9067 / NCIMB 10171 / NRRL 2505 / NI 9100).